We begin with the raw amino-acid sequence, 337 residues long: Tetraacyldisaccharide 4'-kinase (337 aa).

56-63 is an ATP binding site; sequence VAGGAGKT.

Belongs to the LpxK family.

It carries out the reaction a lipid A disaccharide + ATP = a lipid IVA + ADP + H(+). It functions in the pathway glycolipid biosynthesis; lipid IV(A) biosynthesis; lipid IV(A) from (3R)-3-hydroxytetradecanoyl-[acyl-carrier-protein] and UDP-N-acetyl-alpha-D-glucosamine: step 6/6. In terms of biological role, transfers the gamma-phosphate of ATP to the 4'-position of a tetraacyldisaccharide 1-phosphate intermediate (termed DS-1-P) to form tetraacyldisaccharide 1,4'-bis-phosphate (lipid IVA). The protein is Tetraacyldisaccharide 4'-kinase of Rhodospirillum centenum (strain ATCC 51521 / SW).